Reading from the N-terminus, the 154-residue chain is uncharacterized protein (154 aa).

2 coiled-coil regions span residues 8-48 and 89-138; these read DEEV…AIEA and VQEL…RGLV.

This is an uncharacterized protein from Treponema pallidum (strain Nichols).